The chain runs to 396 residues: Ornithine aminotransferase (396 aa).

Residue Lys-255 is modified to N6-(pyridoxal phosphate)lysine.

The protein belongs to the class-III pyridoxal-phosphate-dependent aminotransferase family. OAT subfamily. The cofactor is pyridoxal 5'-phosphate.

Its subcellular location is the cytoplasm. It carries out the reaction a 2-oxocarboxylate + L-ornithine = L-glutamate 5-semialdehyde + an L-alpha-amino acid. It participates in amino-acid biosynthesis; L-proline biosynthesis; L-glutamate 5-semialdehyde from L-ornithine: step 1/1. In terms of biological role, catalyzes the interconversion of ornithine to glutamate semialdehyde. The chain is Ornithine aminotransferase from Staphylococcus carnosus (strain TM300).